Here is a 525-residue protein sequence, read N- to C-terminus: Plant UBX domain-containing protein 13 (525 aa).

Residues 2-44 (ATPTQEAIDTFMTITGSSNAVAVRKLEEYRGNLNRAVNAYFTH) enclose the UBA-like domain. Disordered stretches follow at residues 67-96 (RTTDPFPLRDPNFGRSLFDNDPVMSRPPFV), 150-172 (DDDNQSAPTGQSRHAVPVGSAEN), and 194-328 (METG…EEHD). Over residues 209-229 (AEREVLRSEGWKASSSEREAS) the composition is skewed to basic and acidic residues. Acidic residues predominate over residues 254-274 (SEDDDDDDDDDPDYVEEEEEP). At S362 the chain carries Phosphoserine. Positions 380-436 (LASLEADRVKAEARRLEEEAARVEAIEEAKRKEEEARRKVEEEQELERQLVSKEASL) form a coiled coil. Residues 408-430 (AKRKEEEARRKVEEEQELERQLV) show a composition bias toward basic and acidic residues. Residues 408-446 (AKRKEEEARRKVEEEQELERQLVSKEASLPQEPPAGEEN) form a disordered region. The 79-residue stretch at 443-521 (GEENAITLQV…GLTSKQEALF (79 aa)) folds into the UBX domain.

The polypeptide is Plant UBX domain-containing protein 13 (Arabidopsis thaliana (Mouse-ear cress)).